A 396-amino-acid polypeptide reads, in one-letter code: Elongation factor Tu (396 aa).

Residues 10 to 206 (KPHCNIGTIG…AVDAYIPQPE (197 aa)) form the tr-type G domain. The segment at 19–26 (GHVDHGKT) is G1. A GTP-binding site is contributed by 19-26 (GHVDHGKT). Thr26 is a Mg(2+) binding site. The segment at 60-64 (GITIS) is G2. Positions 81 to 84 (DCPG) are G3. Residues 81–85 (DCPGH) and 136–139 (NKVD) contribute to the GTP site. The interval 136–139 (NKVD) is G4. The G5 stretch occupies residues 174–176 (SAL).

This sequence belongs to the TRAFAC class translation factor GTPase superfamily. Classic translation factor GTPase family. EF-Tu/EF-1A subfamily. In terms of assembly, monomer.

Its subcellular location is the cytoplasm. It catalyses the reaction GTP + H2O = GDP + phosphate + H(+). Its function is as follows. GTP hydrolase that promotes the GTP-dependent binding of aminoacyl-tRNA to the A-site of ribosomes during protein biosynthesis. This chain is Elongation factor Tu, found in Granulibacter bethesdensis (strain ATCC BAA-1260 / CGDNIH1).